Reading from the N-terminus, the 377-residue chain is uncharacterized protein (377 aa).

Helical transmembrane passes span 26 to 46 (TFQNYLLILSMIVSIAVVVAI), 67 to 87 (TVGSILATISALLVSISWVII), 108 to 128 (FLTFVVISFTTVFLFILISLT), and 135 to 155 (IDYGIIYYVIMLNFLMYALYI).

It localises to the cell membrane. This is an uncharacterized protein from Methanocaldococcus jannaschii (strain ATCC 43067 / DSM 2661 / JAL-1 / JCM 10045 / NBRC 100440) (Methanococcus jannaschii).